We begin with the raw amino-acid sequence, 420 residues long: Phosphoribosylamine--glycine ligase (420 aa).

Residues 108-314 enclose the ATP-grasp domain; it reads KEIMVKYGVP…FAQNITDILD (207 aa). 134-195 provides a ligand contact to ATP; sequence IEKHGAPIVV…EEFLEGEEFS (62 aa). Mg(2+) is bound by residues Glu-284 and Asn-286.

Belongs to the GARS family. The cofactor is Mg(2+). Mn(2+) serves as cofactor.

It catalyses the reaction 5-phospho-beta-D-ribosylamine + glycine + ATP = N(1)-(5-phospho-beta-D-ribosyl)glycinamide + ADP + phosphate + H(+). The protein operates within purine metabolism; IMP biosynthesis via de novo pathway; N(1)-(5-phospho-D-ribosyl)glycinamide from 5-phospho-alpha-D-ribose 1-diphosphate: step 2/2. The polypeptide is Phosphoribosylamine--glycine ligase (Streptococcus pneumoniae serotype 4 (strain ATCC BAA-334 / TIGR4)).